Here is a 253-residue protein sequence, read N- to C-terminus: MNRINQKLQEDKKILSIYFSAGYPNLNDTVQIIQDLEKSGVDMIEIGLPFSDPLADGPTIQESSTQALENGMTTKLLFEQLKNIRQTVQIPLIIMGYFNPILQYGVENFCKKCQETGIDGLIIPDLPVDIYAENYKETFEKHGLTNVFLITPQTSNERIRHIDSVSNGFIYLVSSASVTGSSSGFDNIQTNYFKRISEMNLKNPQIIGFGINNKETFNQATQYQKGAIIGSAFIKNLTENGVSSISKFVSEIF.

Active-site proton acceptor residues include E45 and D56.

Belongs to the TrpA family. As to quaternary structure, tetramer of two alpha and two beta chains.

It catalyses the reaction (1S,2R)-1-C-(indol-3-yl)glycerol 3-phosphate + L-serine = D-glyceraldehyde 3-phosphate + L-tryptophan + H2O. The protein operates within amino-acid biosynthesis; L-tryptophan biosynthesis; L-tryptophan from chorismate: step 5/5. The alpha subunit is responsible for the aldol cleavage of indoleglycerol phosphate to indole and glyceraldehyde 3-phosphate. The sequence is that of Tryptophan synthase alpha chain from Flavobacterium psychrophilum (strain ATCC 49511 / DSM 21280 / CIP 103535 / JIP02/86).